The following is a 392-amino-acid chain: 23S rRNA (uracil(747)-C(5))-methyltransferase RlmC (392 aa).

Positions 4, 12, 15, and 93 each coordinate [4Fe-4S] cluster. S-adenosyl-L-methionine is bound by residues Gln218, Phe247, Glu275, and Asn321. The active-site Nucleophile is Cys348.

Belongs to the class I-like SAM-binding methyltransferase superfamily. RNA M5U methyltransferase family. RlmC subfamily.

It catalyses the reaction uridine(747) in 23S rRNA + S-adenosyl-L-methionine = 5-methyluridine(747) in 23S rRNA + S-adenosyl-L-homocysteine + H(+). Its function is as follows. Catalyzes the formation of 5-methyl-uridine at position 747 (m5U747) in 23S rRNA. The protein is 23S rRNA (uracil(747)-C(5))-methyltransferase RlmC of Haemophilus influenzae (strain PittEE).